The following is a 118-amino-acid chain: NAD(P)H-quinone oxidoreductase subunit M (118 aa).

The protein belongs to the complex I NdhM subunit family. NDH-1 can be composed of about 15 different subunits; different subcomplexes with different compositions have been identified which probably have different functions.

Its subcellular location is the cellular thylakoid membrane. It catalyses the reaction a plastoquinone + NADH + (n+1) H(+)(in) = a plastoquinol + NAD(+) + n H(+)(out). The enzyme catalyses a plastoquinone + NADPH + (n+1) H(+)(in) = a plastoquinol + NADP(+) + n H(+)(out). Its function is as follows. NDH-1 shuttles electrons from an unknown electron donor, via FMN and iron-sulfur (Fe-S) centers, to quinones in the respiratory and/or the photosynthetic chain. The immediate electron acceptor for the enzyme in this species is believed to be plastoquinone. Couples the redox reaction to proton translocation, and thus conserves the redox energy in a proton gradient. Cyanobacterial NDH-1 also plays a role in inorganic carbon-concentration. The protein is NAD(P)H-quinone oxidoreductase subunit M of Trichormus variabilis (strain ATCC 29413 / PCC 7937) (Anabaena variabilis).